We begin with the raw amino-acid sequence, 239 residues long: Pimeloyl-[acyl-carrier protein] methyl ester esterase (239 aa).

Substrate-binding positions include Trp-20, 77 to 78, and 138 to 142; these read SM and FISLQ. Residue Ser-77 is the Nucleophile of the active site. Catalysis depends on residues Asp-192 and His-220. His-220 provides a ligand contact to substrate.

This sequence belongs to the AB hydrolase superfamily. Carboxylesterase BioH family. As to quaternary structure, monomer.

The protein localises to the cytoplasm. It catalyses the reaction 6-carboxyhexanoyl-[ACP] methyl ester + H2O = 6-carboxyhexanoyl-[ACP] + methanol + H(+). The protein operates within cofactor biosynthesis; biotin biosynthesis. Functionally, the physiological role of BioH is to remove the methyl group introduced by BioC when the pimeloyl moiety is complete. It allows to synthesize pimeloyl-ACP via the fatty acid synthetic pathway through the hydrolysis of the ester bonds of pimeloyl-ACP esters. The protein is Pimeloyl-[acyl-carrier protein] methyl ester esterase of Legionella pneumophila (strain Corby).